The primary structure comprises 346 residues: Mannonate dehydratase (346 aa).

It belongs to the mannonate dehydratase family. Requires Fe(2+) as cofactor. It depends on Mn(2+) as a cofactor.

It carries out the reaction D-mannonate = 2-dehydro-3-deoxy-D-gluconate + H2O. It participates in carbohydrate metabolism; pentose and glucuronate interconversion. Its function is as follows. Catalyzes the dehydration of D-mannonate. The sequence is that of Mannonate dehydratase from Cupriavidus taiwanensis (strain DSM 17343 / BCRC 17206 / CCUG 44338 / CIP 107171 / LMG 19424 / R1) (Ralstonia taiwanensis (strain LMG 19424)).